We begin with the raw amino-acid sequence, 104 residues long: N(4)-acetylcytidine amidohydrolase (104 aa).

Residues 6 to 96 (ITFYQRFEAD…TIYPNEHESW (91 aa)) form the ASCH domain. Lys21 (proton acceptor) is an active-site residue. The Nucleophile role is filled by Thr24. Catalysis depends on Glu74, which acts as the Proton donor.

It belongs to the N(4)-acetylcytidine amidohydrolase family.

The catalysed reaction is N(4)-acetylcytidine + H2O = cytidine + acetate + H(+). It carries out the reaction N(4)-acetyl-2'-deoxycytidine + H2O = 2'-deoxycytidine + acetate + H(+). The enzyme catalyses N(4)-acetylcytosine + H2O = cytosine + acetate + H(+). Functionally, catalyzes the hydrolysis of N(4)-acetylcytidine (ac4C). In Haemophilus influenzae (strain 86-028NP), this protein is N(4)-acetylcytidine amidohydrolase.